The following is a 276-amino-acid chain: Microtubule-associated protein RP/EB family member 1A (276 aa).

The Calponin-homology (CH) domain occupies 13-115 (FVGRNEILTW…FLQWLKRFCD (103 aa)). The disordered stretch occupies residues 124-172 (ENYNPVERRSRNGKERSVKGSNKIPKSLQTNNNHPPPNSSSVGLSKASG). Residues 129-141 (VERRSRNGKERSV) are compositionally biased toward basic and acidic residues. A compositionally biased stretch (low complexity) spans 162–172 (SSSVGLSKASG). The EB1 C-terminal domain occupies 173-243 (PKSAKAAEVQ…LYATDANESA (71 aa)). The disordered stretch occupies residues 252 to 276 (NQSLGVEDDEAEGNGEQLEEEKTQA). Residues 257-270 (VEDDEAEGNGEQLE) are compositionally biased toward acidic residues.

It belongs to the MAPRE family. As to quaternary structure, homodimer and heterodimer with EB1B. Interacts with tobamovirus movement protein. In terms of tissue distribution, highly expressed in guard cells of leaf stomata, pollen grains and pollen tubes. Expressed in young roots.

Its subcellular location is the cytoplasm. The protein localises to the cytoskeleton. It is found in the spindle pole. The protein resides in the phragmoplast. Binds to the plus end of microtubules and regulates the dynamics of the microtubule cytoskeleton. May be involved in anchoring microtubules to their nucleation sites and/or functioning as a reservoir for distribution to the growing end. In plants, microtubule minus ends are not necessarily severed from the nucleation site and transported to the plus end of a microtubule as part of the recycling process. May play a role in endomembrane organization during polarized growth of plant cells. Interacts with the tobamovirus movement protein (MP) and may play a role in the association of MP with the microtubule system during infection. This is Microtubule-associated protein RP/EB family member 1A (EB1A) from Arabidopsis thaliana (Mouse-ear cress).